The primary structure comprises 94 residues: Ig kappa-B5 chain V region 2699 (94 aa).

The segment at 1 to 23 is framework-1; that stretch reads AFELTQTPSSVEAAVGGTVTINC. A complementarity-determining-1 region spans residues 24–34; the sequence is QASTDISSNLA. The interval 35-49 is framework-2; the sequence is WYTPKPGSPPKLLIY. The tract at residues 50–56 is complementarity-determining-2; the sequence is SASTLAS. The segment at 57–82 is framework-3; sequence GVSSRFKGSGSGVLITLTISDLECGV. Serine 83 is a region of interest (complementarity-determining-3). A framework-4 region spans residues 84 to 93; it reads FGGGTKVVVE.

The polypeptide is Ig kappa-B5 chain V region 2699 (Oryctolagus cuniculus (Rabbit)).